We begin with the raw amino-acid sequence, 270 residues long: Probable sulfate transport system permease protein cysT (270 aa).

Transmembrane regions (helical) follow at residues 13-33 (LIVI…LFSY), 61-81 (MALY…WVLT), 94-114 (IVDL…STVF), 138-158 (ILLA…QPIL), 180-200 (FKRF…TLTF), 208-228 (GSIV…SVLI), and 238-258 (IGAC…LLFV). In terms of domain architecture, ABC transmembrane type-1 spans 55-256 (YTLTIKMALY…VLMLACSVLL (202 aa)).

This sequence belongs to the binding-protein-dependent transport system permease family. CysTW subfamily.

It is found in the plastid membrane. Functionally, part of the ABC transporter complex cysAWTP (TC 3.A.1.6.1) involved in sulfate/thiosulfate import. Probably responsible for the translocation of the substrate across the membrane. The sequence is that of Probable sulfate transport system permease protein cysT (cysT) from Helicosporidium sp. subsp. Simulium jonesii (Green alga).